The sequence spans 199 residues: Fe/S biogenesis protein NfuA (199 aa).

[4Fe-4S] cluster is bound by residues Cys151 and Cys154.

This sequence belongs to the NfuA family. As to quaternary structure, homodimer. The cofactor is [4Fe-4S] cluster.

In terms of biological role, involved in iron-sulfur cluster biogenesis. Binds a 4Fe-4S cluster, can transfer this cluster to apoproteins, and thereby intervenes in the maturation of Fe/S proteins. Could also act as a scaffold/chaperone for damaged Fe/S proteins. The polypeptide is Fe/S biogenesis protein NfuA (Stenotrophomonas maltophilia (strain K279a)).